A 1047-amino-acid polypeptide reads, in one-letter code: Ribonucleoside-diphosphate reductase subunit alpha (1047 aa).

ATP-cone domains follow at residues 9-111 (CTIV…KAHR), 118-219 (LSVV…ARVR), and 237-327 (VEVL…EALG). Residues Thr-442, 457-458 (SC), Gly-486, 670-674 (NLCTE), and 857-861 (PTATI) contribute to the substrate site. Cys-458 and Cys-687 are joined by a disulfide. Asn-670 (proton acceptor) is an active-site residue. Cys-672 functions as the Cysteine radical intermediate in the catalytic mechanism. Residue Glu-674 is the Proton acceptor of the active site.

The protein belongs to the ribonucleoside diphosphate reductase large chain family. In terms of assembly, tetramer of two alpha and two beta subunits.

The enzyme catalyses a 2'-deoxyribonucleoside 5'-diphosphate + [thioredoxin]-disulfide + H2O = a ribonucleoside 5'-diphosphate + [thioredoxin]-dithiol. With respect to regulation, under complex allosteric control mediated by deoxynucleoside triphosphates and ATP binding. The type of nucleotide bound at the specificity site determines substrate preference. It seems probable that ATP makes the enzyme reduce CDP and UDP, dGTP favors ADP reduction and dTTP favors GDP reduction. Provides the precursors necessary for DNA synthesis. Catalyzes the biosynthesis of deoxyribonucleotides from the corresponding ribonucleotides. The polypeptide is Ribonucleoside-diphosphate reductase subunit alpha (nrdA) (Chlamydia trachomatis serovar D (strain ATCC VR-885 / DSM 19411 / UW-3/Cx)).